The sequence spans 430 residues: Enolase (430 aa).

Gln-167 contributes to the (2R)-2-phosphoglycerate binding site. Glu-209 (proton donor) is an active-site residue. Positions 245, 286, and 313 each coordinate Mg(2+). Residues Lys-338, Arg-367, Ser-368, and Lys-389 each coordinate (2R)-2-phosphoglycerate. The active-site Proton acceptor is the Lys-338.

This sequence belongs to the enolase family. The cofactor is Mg(2+).

It localises to the cytoplasm. The protein localises to the secreted. The protein resides in the cell surface. It catalyses the reaction (2R)-2-phosphoglycerate = phosphoenolpyruvate + H2O. It participates in carbohydrate degradation; glycolysis; pyruvate from D-glyceraldehyde 3-phosphate: step 4/5. In terms of biological role, catalyzes the reversible conversion of 2-phosphoglycerate (2-PG) into phosphoenolpyruvate (PEP). It is essential for the degradation of carbohydrates via glycolysis. In Parasynechococcus marenigrum (strain WH8102), this protein is Enolase.